Consider the following 94-residue polypeptide: Co-chaperonin GroES (94 aa).

Belongs to the GroES chaperonin family. Heptamer of 7 subunits arranged in a ring. Interacts with the chaperonin GroEL.

Its subcellular location is the cytoplasm. Functionally, together with the chaperonin GroEL, plays an essential role in assisting protein folding. The GroEL-GroES system forms a nano-cage that allows encapsulation of the non-native substrate proteins and provides a physical environment optimized to promote and accelerate protein folding. GroES binds to the apical surface of the GroEL ring, thereby capping the opening of the GroEL channel. In Streptococcus pneumoniae (strain CGSP14), this protein is Co-chaperonin GroES.